The primary structure comprises 423 residues: Isovaleryl-CoA dehydrogenase, mitochondrial (423 aa).

The N-terminal 29 residues, 1–29 (MATATRLLGWRVASWRMRPPPAGFVSQRA), are a transit peptide targeting the mitochondrion. Residues lysine 55, lysine 64, and lysine 75 each carry the N6-acetyllysine; alternate modification. Lysine 55, lysine 64, and lysine 75 each carry N6-succinyllysine; alternate. FAD-binding positions include 162 to 171 (LAMSEPNAGS) and 195 to 197 (WIT). Serine 171 is a binding site for substrate. Residue 219–220 (SR) coordinates substrate. Lysine 238 carries the N6-acetyllysine modification. Lysine 259 is modified (N6-acetyllysine; alternate). Lysine 259 carries the N6-succinyllysine; alternate modification. Substrate is bound by residues tyrosine 274 and 281–284 (DLER). Glutamate 283 functions as the Proton acceptor in the catalytic mechanism. FAD is bound at residue arginine 309. At lysine 315 the chain carries N6-succinyllysine. FAD contacts are provided by residues glutamine 320 and 377 to 381 (QCFGG). Residue 404 to 405 (AG) coordinates substrate. 406–408 (TSE) contacts FAD.

Belongs to the acyl-CoA dehydrogenase family. As to quaternary structure, homotetramer. The cofactor is FAD.

Its subcellular location is the mitochondrion matrix. The enzyme catalyses 3-methylbutanoyl-CoA + oxidized [electron-transfer flavoprotein] + H(+) = 3-methylbut-2-enoyl-CoA + reduced [electron-transfer flavoprotein]. The catalysed reaction is pentanoyl-CoA + oxidized [electron-transfer flavoprotein] + H(+) = (2E)-pentenoyl-CoA + reduced [electron-transfer flavoprotein]. It carries out the reaction hexanoyl-CoA + oxidized [electron-transfer flavoprotein] + H(+) = (2E)-hexenoyl-CoA + reduced [electron-transfer flavoprotein]. It catalyses the reaction butanoyl-CoA + oxidized [electron-transfer flavoprotein] + H(+) = (2E)-butenoyl-CoA + reduced [electron-transfer flavoprotein]. It functions in the pathway amino-acid degradation; L-leucine degradation; (S)-3-hydroxy-3-methylglutaryl-CoA from 3-isovaleryl-CoA: step 1/3. Functionally, catalyzes the conversion of isovaleryl-CoA/3-methylbutanoyl-CoA to 3-methylbut-2-enoyl-CoA as an intermediate step in the leucine (Leu) catabolic pathway. To a lesser extent, is also able to catalyze the oxidation of other saturated short-chain acyl-CoA thioesters as pentanoyl-CoA, hexenoyl-CoA and butenoyl-CoA. The protein is Isovaleryl-CoA dehydrogenase, mitochondrial (IVD) of Pongo abelii (Sumatran orangutan).